Here is a 284-residue protein sequence, read N- to C-terminus: Acetylglutamate kinase (284 aa).

Residues 66–67 (GG), Arg88, and Asn179 contribute to the substrate site.

It belongs to the acetylglutamate kinase family. ArgB subfamily.

The protein resides in the cytoplasm. It carries out the reaction N-acetyl-L-glutamate + ATP = N-acetyl-L-glutamyl 5-phosphate + ADP. The protein operates within amino-acid biosynthesis; L-arginine biosynthesis; N(2)-acetyl-L-ornithine from L-glutamate: step 2/4. Catalyzes the ATP-dependent phosphorylation of N-acetyl-L-glutamate. This Actinobacillus pleuropneumoniae serotype 7 (strain AP76) protein is Acetylglutamate kinase.